Consider the following 119-residue polypeptide: MPRVKRGVTARARHKKVIAAAKGYRGRRGNVFRIAKQAVMRAGQYAYRDRRNKKRTFRALWITRINAAVREQGMSYSVFIAGLKKAAIELDRKVLADLAVRDKAGFAAIVQQAKAALAA.

This sequence belongs to the bacterial ribosomal protein bL20 family.

Binds directly to 23S ribosomal RNA and is necessary for the in vitro assembly process of the 50S ribosomal subunit. It is not involved in the protein synthesizing functions of that subunit. This Bordetella bronchiseptica (strain ATCC BAA-588 / NCTC 13252 / RB50) (Alcaligenes bronchisepticus) protein is Large ribosomal subunit protein bL20.